The following is a 524-amino-acid chain: Ribonuclease Y (524 aa).

Residues 3-23 (IVINLFLIIFASVVFFAAGFF) form a helical membrane-spanning segment. A KH domain is found at 214-274 (ALSVVHIQSD…LRREHAKLTL (61 aa)). The 93-residue stretch at 340 to 432 (LLQHSREVAM…VDAANVISLA (93 aa)) folds into the HD domain.

The protein belongs to the RNase Y family.

It is found in the cell membrane. Functionally, endoribonuclease that initiates mRNA decay. The polypeptide is Ribonuclease Y (Chlorobium luteolum (strain DSM 273 / BCRC 81028 / 2530) (Pelodictyon luteolum)).